The chain runs to 599 residues: Elongation factor 4 (599 aa).

The tr-type G domain occupies 2-185 (ENIRNFSIIA…AITKRIPPPK (184 aa)). GTP-binding positions include 14 to 19 (DHGKST) and 132 to 135 (NKID).

It belongs to the TRAFAC class translation factor GTPase superfamily. Classic translation factor GTPase family. LepA subfamily.

It localises to the cell inner membrane. It carries out the reaction GTP + H2O = GDP + phosphate + H(+). Required for accurate and efficient protein synthesis under certain stress conditions. May act as a fidelity factor of the translation reaction, by catalyzing a one-codon backward translocation of tRNAs on improperly translocated ribosomes. Back-translocation proceeds from a post-translocation (POST) complex to a pre-translocation (PRE) complex, thus giving elongation factor G a second chance to translocate the tRNAs correctly. Binds to ribosomes in a GTP-dependent manner. The protein is Elongation factor 4 of Hydrogenobaculum sp. (strain Y04AAS1).